Here is a 441-residue protein sequence, read N- to C-terminus: 3-oxo-glucose-6-phosphate:glutamate aminotransferase (441 aa).

98–99 is a binding site for substrate; that stretch reads TS. 125–126 lines the pyridoxal 5'-phosphate pocket; it reads GT. Residue phenylalanine 151 coordinates substrate. 2 residues coordinate pyridoxal 5'-phosphate: glutamine 225 and serine 242. Residue 244–246 participates in substrate binding; sequence NPY. The residue at position 247 (lysine 247) is an N6-(pyridoxal phosphate)lysine. Residues tyrosine 274 and lysine 282 each contribute to the substrate site. Position 292 (asparagine 292) interacts with pyridoxal 5'-phosphate. Tyrosine 379 is a binding site for substrate.

It belongs to the DegT/DnrJ/EryC1 family. As to quaternary structure, homodimer. Pyridoxal 5'-phosphate is required as a cofactor.

The enzyme catalyses 3-dehydro-D-glucose 6-phosphate + L-glutamate = D-kanosamine 6-phosphate + 2-oxoglutarate. It functions in the pathway antibiotic biosynthesis; kanosamine biosynthesis. Functionally, involved in the biosynthesis of kanosamine (3-amino-3-deoxy-D-glucose), which is known to have antibiotic and antifungal properties, and to be a precursor of the antibiotic neotrehalosadiamine (3,3'-diamino-3,3'-dideoxy-alpha,beta-trehalose (NTD)). Catalyzes the reversible pyridoxal phosphate-dependent transamination of 3-dehydro-alpha-D-glucose 6-phosphate to form alpha-D-kanosamine-6-phosphate. It can only use alpha-anomer and glutamate is the only amino donor. The sequence is that of 3-oxo-glucose-6-phosphate:glutamate aminotransferase (ntdA) from Bacillus subtilis (strain 168).